We begin with the raw amino-acid sequence, 355 residues long: Guanine nucleotide-binding protein subunit beta-5a (355 aa).

A disordered region spans residues 1–23; sequence MAAQEEPAQPGDSLATLKSESDT. WD repeat units follow at residues 63-102, 105-144, 153-194, 195-238, 239-278, 280-322, and 325-355; these read GHGNKVLCMDWCKDKRRIVSSSQDGKVIVWDAFTTNKEHA, MPCTWVMACAYAPSGCAVACGGLDNKCSVYPLSLDKNENL, MHTN…QSFH, GHAA…QSFE, SHDSDINSVRYYPSGDAFASGSDDATCRLYDLRADREVAI, SKES…RVSI, and GHENRVSTLRVSPDGTAFCSGSWDHTLRIWA.

The protein belongs to the WD repeat G protein beta family. In terms of assembly, may interact with RGS9; this interaction stabilizes both proteins and increases RGS9 GTPase-activating protein (GAP) activity, hence accelerating the deactivation of D(2) dopamine receptor-mediated signaling.

It is found in the membrane. Enhances GTPase-activating protein (GAP) activity of regulator of G protein signaling (RGS) proteins, such as RGS7 and RGS9, hence involved in the termination of the signaling initiated by the G protein coupled receptors (GPCRs) by accelerating the GTP hydrolysis on the G-alpha subunits, thereby promoting their inactivation. Increases RGS7 GTPase-activating protein (GAP) activity, thereby regulating mood and cognition. Increases RGS9 GTPase-activating protein (GAP) activity, hence contributes to the deactivation of G protein signaling initiated by D(2) dopamine receptors. Along with gnb5b, plays an important role in neuronal signaling, including in the parasympathetic, but not sympathetic, control of heart rate. This Danio rerio (Zebrafish) protein is Guanine nucleotide-binding protein subunit beta-5a.